The primary structure comprises 428 residues: Histidinol dehydrogenase (428 aa).

The substrate site is built by Ser234, Gln256, and His259. The Zn(2+) site is built by Gln256 and His259. Residues Glu324 and His325 each act as proton acceptor in the active site. 4 residues coordinate substrate: His325, Asp358, Glu412, and His417. Asp358 is a Zn(2+) binding site. His417 lines the Zn(2+) pocket.

This sequence belongs to the histidinol dehydrogenase family. It depends on Zn(2+) as a cofactor.

The catalysed reaction is L-histidinol + 2 NAD(+) + H2O = L-histidine + 2 NADH + 3 H(+). The protein operates within amino-acid biosynthesis; L-histidine biosynthesis; L-histidine from 5-phospho-alpha-D-ribose 1-diphosphate: step 9/9. Catalyzes the sequential NAD-dependent oxidations of L-histidinol to L-histidinaldehyde and then to L-histidine. In Pelagibacter ubique (strain HTCC1062), this protein is Histidinol dehydrogenase.